A 322-amino-acid chain; its full sequence is tRNA uridine(34) hydroxylase (322 aa).

In terms of domain architecture, Rhodanese spans 125–219; the sequence is QDPNTIVIDA…YGKDPEVQGK (95 aa). C179 serves as the catalytic Cysteine persulfide intermediate.

This sequence belongs to the TrhO family.

It catalyses the reaction uridine(34) in tRNA + AH2 + O2 = 5-hydroxyuridine(34) in tRNA + A + H2O. Catalyzes oxygen-dependent 5-hydroxyuridine (ho5U) modification at position 34 in tRNAs. In Bacillus subtilis (strain 168), this protein is tRNA uridine(34) hydroxylase.